The chain runs to 325 residues: Ribonucleoside-diphosphate reductase small chain (325 aa).

Residues Asp-76, Glu-107, and His-110 each contribute to the Fe cation site. Tyr-114 is a catalytic residue. Fe cation-binding residues include Glu-170, Glu-204, and His-207.

This sequence belongs to the ribonucleoside diphosphate reductase small chain family. As to quaternary structure, heterodimer of a large and a small subunit. Requires Fe cation as cofactor.

The enzyme catalyses a 2'-deoxyribonucleoside 5'-diphosphate + [thioredoxin]-disulfide + H2O = a ribonucleoside 5'-diphosphate + [thioredoxin]-dithiol. Its function is as follows. Provides the precursors necessary for DNA synthesis. Catalyzes the biosynthesis of deoxyribonucleotides from the corresponding ribonucleotides. The sequence is that of Ribonucleoside-diphosphate reductase small chain from Encephalitozoon cuniculi (strain GB-M1) (Microsporidian parasite).